A 1378-amino-acid polypeptide reads, in one-letter code: MAQTLSFNGRRRVRKFFGKIPEVAEMPNLIEVQKASYDQFLMVDEPKGGRPDEGLNAVFKSVFPITDFSGASMLEFVSYEFEAPKFDVEECRQRDLTYAAPLKVTLRLIVFDIDEDTGAKSIKDIKEQSVYMGDMPLMTNNGTFIVNGTERVIVSQMHRSPGVFFDHDKGKSHSSGKLLFAARVIPYRGSWLDIEFDAKDIVYARIDRRRKLPVTSLLMALGMDGEEILSTFYTKATYERSGDGWRIPFQPEALKNAKVITDMIDADTGEVVVEGGKKLTPRLIRQLVDKGLKALKATDEDLYGNYLAEDIVNYSTGEIYLEAGDEIDEKTLGLILQSGFDEIPVLNIDHVNVGAYIRNTLSADKNQNRQEALFDIYRVMRPGEPPTMDSAEAMFNSLFFDAERYDLSAVGRVKMNMRLDLDAEDTVRTLRKEDILAVVKMLVELRDGKGEIDDIDNLGNRRVRSVGELMENQYRLGLLRMERAIKERMSSIEIDTVMPQDLINAKPAAAAVREFFGSSQLSQFMDQVNPLSEITHKRRLSALGPGGLTRERAGFEVRDVHPTHYGRICPIETPEGPNIGLINSLATFARVNKYGFIESPYRKIIDGKVTTDVIYLSAMEEAKYYVAQANAELDGEGAFTEEFVVCRHSGEVMLAPRDNINLMDVSPKQLVSVAAALIPFLENDDANRALMGSNMQRQAVPLLRAEAPFVGTGMEPIVARDSGAAIAARRGGVVDQVDATRIVIRATEDLDAGKSGVDIYRLQKFQRSNQNTCVNQRPLVSVGDAISKGDIIADGPSTDLGDLALGRNALVAFMPWNGYNYEDSILMSERIVSDDVFTSIHIEEFEVMARDTKLGPEEITRDIPNVSEEALKNLDEAGIVYIGAEVQPGDILVGKITPKGESPMTPEEKLLRAIFGEKASDVRDTSMRMPPGTFGTIVEVRVFNRHGVEKDERAMAIEREEIERLAKDRDDEQAILDRNVYGRLIDMLRGHVSIAGPKGFKKGVELSNAVVSEYPRSQWWMFAVEDEKAQSELEALRGQYDESKSRLEQRFMDKVEKVQRGDEMPPGVMKMVKVFVAVKRKIQPGDKMAGRHGNKGVVSRIVPVEDMPFLEDGTHVDICLNPLGVPSRMNVGQILETHLAWACAGMGKKIGEMLEEYRKTMDISELRSELTEIYASEANDEVQRFDDDSLVKLAEEAKRGVSIATPVFDGAHEPDVAAMLKKAGLHESGQSVLYDGRTGEPFDRKVTVGYMYMIKLNHLVDDKIHARSIGPYSLVTQQPLGGKAQFGGQRFGEMEVWALEAYGAAYTLQEMLTVKSDDVAGRTKVYEAIVRGDDTFEAGIPESFNVLVKEMRSLGLSVELENSKIENQSEDQLPDAAE.

It belongs to the RNA polymerase beta chain family. The RNAP catalytic core consists of 2 alpha, 1 beta, 1 beta' and 1 omega subunit. When a sigma factor is associated with the core the holoenzyme is formed, which can initiate transcription.

It carries out the reaction RNA(n) + a ribonucleoside 5'-triphosphate = RNA(n+1) + diphosphate. Functionally, DNA-dependent RNA polymerase catalyzes the transcription of DNA into RNA using the four ribonucleoside triphosphates as substrates. This chain is DNA-directed RNA polymerase subunit beta, found in Agrobacterium fabrum (strain C58 / ATCC 33970) (Agrobacterium tumefaciens (strain C58)).